The chain runs to 363 residues: Peptide chain release factor 2 (363 aa).

Residue Gln251 is modified to N5-methylglutamine.

It belongs to the prokaryotic/mitochondrial release factor family. Methylated by PrmC. Methylation increases the termination efficiency of RF2.

It localises to the cytoplasm. Its function is as follows. Peptide chain release factor 2 directs the termination of translation in response to the peptide chain termination codons UGA and UAA. The sequence is that of Peptide chain release factor 2 from Helicobacter pylori (strain Shi470).